Reading from the N-terminus, the 242-residue chain is Large ribosomal subunit protein uL1 (242 aa).

The protein belongs to the universal ribosomal protein uL1 family. As to quaternary structure, part of the 50S ribosomal subunit.

Binds directly to 23S rRNA. The L1 stalk is quite mobile in the ribosome, and is involved in E site tRNA release. In terms of biological role, protein L1 is also a translational repressor protein, it controls the translation of the L11 operon by binding to its mRNA. The polypeptide is Large ribosomal subunit protein uL1 (Streptomyces sp. (strain FRI-5)).